A 263-amino-acid chain; its full sequence is Interleukin-22 receptor subunit alpha-2 (263 aa).

The N-terminal stretch at 1 to 21 is a signal peptide; the sequence is MMPKHCFLGFLISFFLTGVAG. 3 Fibronectin type-III domains span residues 26 to 68, 100 to 161, and 162 to 263; these read HESL…KIMF, GQRQ…TKID, and PPVM…VEIP. N-linked (GlcNAc...) asparagine glycosylation occurs at N56. C110 and C118 form a disulfide bridge. N-linked (GlcNAc...) asparagine glycans are attached at residues N166, N171, N192, and N209. C238 and C259 are disulfide-bonded.

Belongs to the type II cytokine receptor family. As to expression, expressed in placenta, spleen, breast, skin and lung. Also detected in intestinal tract, testis, brain, heart and thymus. No expression found in prostate, bladder, kidney, ovary, muscle, bone marrow, liver and uterus. Isoform 1 is expressed only in placenta. Isoform 2 is expressed in placenta and breast and at lower level in spleen, skin, thymus and stomach.

It is found in the secreted. Its function is as follows. Isoform 2 is a receptor for IL22. Binds to IL22, prevents interaction with the functional IL-22R complex and blocks the activity of IL22 (in vitro). May play an important role as an IL22 antagonist in the regulation of inflammatory responses. Functionally, isoform 1 may play a role in establishing and maintaining successful pregnancy. The chain is Interleukin-22 receptor subunit alpha-2 (IL22RA2) from Homo sapiens (Human).